Here is a 166-residue protein sequence, read N- to C-terminus: NADH-quinone oxidoreductase subunit A (166 aa).

The next 3 membrane-spanning stretches (helical) occupy residues 16–36 (FAVF…GAYF), 68–88 (FYLV…LYAW), and 98–118 (IGFI…FYLV). The disordered stretch occupies residues 141 to 166 (RYASSHPQDISQELSVAGSQQANESR).

The protein belongs to the complex I subunit 3 family. In terms of assembly, NDH-1 is composed of 13 different subunits. Subunits NuoA, H, J, K, L, M, N constitute the membrane sector of the complex.

Its subcellular location is the cell inner membrane. The enzyme catalyses a quinone + NADH + 5 H(+)(in) = a quinol + NAD(+) + 4 H(+)(out). Its function is as follows. NDH-1 shuttles electrons from NADH, via FMN and iron-sulfur (Fe-S) centers, to quinones in the respiratory chain. The immediate electron acceptor for the enzyme in this species is believed to be ubiquinone. Couples the redox reaction to proton translocation (for every two electrons transferred, four hydrogen ions are translocated across the cytoplasmic membrane), and thus conserves the redox energy in a proton gradient. This Yersinia pseudotuberculosis serotype O:1b (strain IP 31758) protein is NADH-quinone oxidoreductase subunit A.